We begin with the raw amino-acid sequence, 425 residues long: Histone-binding protein RBBP4 (425 aa).

The residue at position 2 (Ala2) is an N-acetylalanine. WD repeat units follow at residues 32–125 (YDLV…NHEG), 126–175 (EVNR…RLRG), 176–223 (HQKE…KTIF), 225–270 (GHTA…HSVD), 271–314 (AHTA…HSFE), 315–371 (SHKD…FIHG), and 372–404 (GHTA…VWQM). Residues 361–406 (DGPPELLFIHGGHTAKISDFSWNPNEPWVICSVSEDNIMQVWQMAE) are interaction with HAT1.

The protein belongs to the WD repeat RBAP46/RBAP48/MSI1 family. In terms of assembly, binds directly to histone H4, probably via helix 1 of the histone fold, a region that is not accessible when histone H4 is in chromatin. Interacts with CHAF1A, HDAC1, HDAC2, HDAC3 and HIRA. May also interact with HAT1.

The protein localises to the nucleus. It localises to the chromosome. Its subcellular location is the telomere. Functionally, core histone-binding subunit that may target chromatin assembly factors, chromatin remodeling factors and histone deacetylases to their histone substrates in a manner that is regulated by nucleosomal DNA. Component of several complexes which regulate chromatin metabolism. The polypeptide is Histone-binding protein RBBP4 (RBBP4) (Gallus gallus (Chicken)).